We begin with the raw amino-acid sequence, 427 residues long: Serine hydroxymethyltransferase (427 aa).

Residues L124 and 128 to 130 (GHL) contribute to the (6S)-5,6,7,8-tetrahydrofolate site. Position 233 is an N6-(pyridoxal phosphate)lysine (K233).

It belongs to the SHMT family. As to quaternary structure, homodimer. Pyridoxal 5'-phosphate serves as cofactor.

The protein localises to the cytoplasm. It catalyses the reaction (6R)-5,10-methylene-5,6,7,8-tetrahydrofolate + glycine + H2O = (6S)-5,6,7,8-tetrahydrofolate + L-serine. The protein operates within one-carbon metabolism; tetrahydrofolate interconversion. It functions in the pathway amino-acid biosynthesis; glycine biosynthesis; glycine from L-serine: step 1/1. Catalyzes the reversible interconversion of serine and glycine with tetrahydrofolate (THF) serving as the one-carbon carrier. This reaction serves as the major source of one-carbon groups required for the biosynthesis of purines, thymidylate, methionine, and other important biomolecules. Also exhibits THF-independent aldolase activity toward beta-hydroxyamino acids, producing glycine and aldehydes, via a retro-aldol mechanism. The sequence is that of Serine hydroxymethyltransferase from Paracoccus denitrificans (strain Pd 1222).